Reading from the N-terminus, the 162-residue chain is Nitrogen regulatory protein (162 aa).

In terms of domain architecture, PTS EIIA type-2 spans N12 to A156. Residue H73 is the Tele-phosphohistidine intermediate of the active site.

The protein resides in the cytoplasm. Its function is as follows. Seems to have a role in regulating nitrogen assimilation. In Klebsiella oxytoca, this protein is Nitrogen regulatory protein (ptsN).